Reading from the N-terminus, the 154-residue chain is MRLTKQTNYAVRMLMYCAANGEKLSRIPEIARAYGVSELFLFKILQPLTRAGLVETVRGRNGGVRLPRPASEITLFDVVKVTEDSFAMAECFEAGEIDCPLVDSCGLNAALRKALNAFFEVLQGYTIDDLVKARPQINFLLGLEEPVRPQTSAA.

The HTH rrf2-type domain maps to 2–132 (RLTKQTNYAV…QGYTIDDLVK (131 aa)). Cysteine 91, cysteine 99, and cysteine 105 together coordinate [2Fe-2S] cluster.

The cofactor is [2Fe-2S] cluster.

Required for growth utilizing PHB cycle intermediates. The protein is Protein aau3 (aau3) of Rhizobium meliloti (strain 1021) (Ensifer meliloti).